A 132-amino-acid polypeptide reads, in one-letter code: Small ribosomal subunit protein uS8 (132 aa).

Belongs to the universal ribosomal protein uS8 family. Part of the 30S ribosomal subunit. Contacts proteins S5 and S12.

Functionally, one of the primary rRNA binding proteins, it binds directly to 16S rRNA central domain where it helps coordinate assembly of the platform of the 30S subunit. In Maricaulis maris (strain MCS10) (Caulobacter maris), this protein is Small ribosomal subunit protein uS8.